The primary structure comprises 403 residues: MASRWRELHGSGHWDGLLDPLDVDLRRCLITYGEMIMATYEAFIGEHRSPNAGMCRYRRADLFRRVDVSHPGWYAATRYIYATANADVHGKVLLRPLCREGRATECNWMGYVAVATDEGAAALGRRDIVVAWRGTQRALEWVADLKLAPASAAGILGPEGADGTDPSVHRGYLSLYTSEDQCSELNKQSARMQVLTEIARLMDKYKDEETSITVIGHSLGATLATLNAADIAANSYNTSSLSPSGETRAPVTAVVFGSPRTGDRGFRDAFHRLRDLRMLRVRNRPDRIPHYPPVGYADVGVELLIDTRLSPFLRRHGSESQSHDLECHLHGVAGWHGDHRGFELVVDRDVALVNKFDDCLADEYPVPVRWKVHHNKSMVKGPDGRWVLQDHEPDDDDDDDDDD.

The active-site Acyl-ester intermediate is serine 218. Catalysis depends on charge relay system residues serine 218, aspartate 286, and histidine 323. Residues 381–403 (GPDGRWVLQDHEPDDDDDDDDDD) are disordered. Acidic residues predominate over residues 392–403 (EPDDDDDDDDDD).

The protein belongs to the AB hydrolase superfamily. Lipase family.

The protein resides in the cytoplasm. Functionally, acylhydrolase that catalyzes the hydrolysis of phospholipids at the sn-1 position. The chain is Phospholipase A1-II 2 from Oryza sativa subsp. indica (Rice).